The chain runs to 509 residues: Maturase K (509 aa).

This sequence belongs to the intron maturase 2 family. MatK subfamily.

The protein resides in the plastid. It is found in the chloroplast. Usually encoded in the trnK tRNA gene intron. Probably assists in splicing its own and other chloroplast group II introns. The chain is Maturase K from Solanum lycopersicum (Tomato).